Consider the following 37-residue polypeptide: Cellular retinoic acid-binding protein 2 (37 aa).

The short motif at 21–31 is the Nuclear localization signal element; it reads KALGVNMMLRK.

This sequence belongs to the calycin superfamily. Fatty-acid binding protein (FABP) family. In terms of tissue distribution, embryo.

The protein localises to the cytoplasm. It is found in the endoplasmic reticulum. It localises to the nucleus. Functionally, transports retinoic acid to the nucleus. Regulates the access of retinoic acid to the nuclear retinoic acid receptors. This Gallus gallus (Chicken) protein is Cellular retinoic acid-binding protein 2 (CRABP2).